Consider the following 358-residue polypeptide: Glycerophosphodiester phosphodiesterase, periplasmic (358 aa).

The N-terminal stretch at 1 to 25 is a signal peptide; it reads MKLTLKNLSMAIMMSTIVMGSSAMA. The GP-PDE domain maps to 31 to 355; that stretch reads KIVIAHRGAS…DFPDKAVKFL (325 aa). His36 (proton acceptor) is an active-site residue. Residues Glu63 and Asp65 each coordinate Ca(2+). The active-site Proton donor is His78. Glu171 is a binding site for Ca(2+).

This sequence belongs to the glycerophosphoryl diester phosphodiesterase family. In terms of assembly, homodimer. Ca(2+) is required as a cofactor.

The protein localises to the periplasm. The catalysed reaction is a sn-glycero-3-phosphodiester + H2O = an alcohol + sn-glycerol 3-phosphate + H(+). In terms of biological role, glycerophosphodiester phosphodiesterase hydrolyzes glycerophosphodiesters into glycerol-3-phosphate (G3P) and the corresponding alcohol. This chain is Glycerophosphodiester phosphodiesterase, periplasmic (glpQ), found in Escherichia coli (strain K12).